A 341-amino-acid polypeptide reads, in one-letter code: Anthranilate phosphoribosyltransferase (341 aa).

5-phospho-alpha-D-ribose 1-diphosphate-binding positions include Gly-79, 82-83 (GD), Thr-87, 89-92 (NIST), 107-115 (KHGNRAVSS), and Ser-119. Position 79 (Gly-79) interacts with anthranilate. Residue Ser-91 participates in Mg(2+) binding. Position 110 (Asn-110) interacts with anthranilate. Anthranilate is bound at residue Arg-165. Residues Asp-224 and Glu-225 each contribute to the Mg(2+) site.

It belongs to the anthranilate phosphoribosyltransferase family. In terms of assembly, homodimer. Mg(2+) is required as a cofactor.

The catalysed reaction is N-(5-phospho-beta-D-ribosyl)anthranilate + diphosphate = 5-phospho-alpha-D-ribose 1-diphosphate + anthranilate. The protein operates within amino-acid biosynthesis; L-tryptophan biosynthesis; L-tryptophan from chorismate: step 2/5. Catalyzes the transfer of the phosphoribosyl group of 5-phosphorylribose-1-pyrophosphate (PRPP) to anthranilate to yield N-(5'-phosphoribosyl)-anthranilate (PRA). This chain is Anthranilate phosphoribosyltransferase, found in Bacillus cereus (strain AH820).